We begin with the raw amino-acid sequence, 298 residues long: Small ribosomal subunit biogenesis GTPase RsgA (298 aa).

The 162-residue stretch at 67-228 (TNELVRPPIS…IADTPGFSSL (162 aa)) folds into the CP-type G domain. GTP contacts are provided by residues 116-119 (TKMD) and 171-179 (GQSGVGKSS). Zn(2+) is bound by residues cysteine 252, cysteine 257, histidine 259, and cysteine 265.

The protein belongs to the TRAFAC class YlqF/YawG GTPase family. RsgA subfamily. In terms of assembly, monomer. Associates with 30S ribosomal subunit, binds 16S rRNA. The cofactor is Zn(2+).

It is found in the cytoplasm. In terms of biological role, one of several proteins that assist in the late maturation steps of the functional core of the 30S ribosomal subunit. Helps release RbfA from mature subunits. May play a role in the assembly of ribosomal proteins into the subunit. Circularly permuted GTPase that catalyzes slow GTP hydrolysis, GTPase activity is stimulated by the 30S ribosomal subunit. The protein is Small ribosomal subunit biogenesis GTPase RsgA of Bacillus pumilus (strain SAFR-032).